A 285-amino-acid polypeptide reads, in one-letter code: Pantothenate synthetase (285 aa).

32 to 39 is an ATP binding site; sequence MGALHDGH. Residue His-39 is the Proton donor of the active site. Residue Gln-63 coordinates (R)-pantoate. Residue Gln-63 participates in beta-alanine binding. ATP is bound at residue 149-152; that stretch reads GEKD. Gln-155 serves as a coordination point for (R)-pantoate. Residues Val-178 and 186–189 contribute to the ATP site; that span reads MSSR.

Belongs to the pantothenate synthetase family. In terms of assembly, homodimer.

The protein localises to the cytoplasm. The catalysed reaction is (R)-pantoate + beta-alanine + ATP = (R)-pantothenate + AMP + diphosphate + H(+). The protein operates within cofactor biosynthesis; (R)-pantothenate biosynthesis; (R)-pantothenate from (R)-pantoate and beta-alanine: step 1/1. In terms of biological role, catalyzes the condensation of pantoate with beta-alanine in an ATP-dependent reaction via a pantoyl-adenylate intermediate. The protein is Pantothenate synthetase of Ruegeria pomeroyi (strain ATCC 700808 / DSM 15171 / DSS-3) (Silicibacter pomeroyi).